We begin with the raw amino-acid sequence, 428 residues long: 26S proteasome regulatory subunit 6B homolog (428 aa).

N-acetylmethionine is present on Met-1. ATP is bound at residue Gly-213–Thr-220. A Glycyl lysine isopeptide (Lys-Gly) (interchain with G-Cter in ubiquitin) cross-link involves residue Lys-280.

The protein belongs to the AAA ATPase family. In terms of processing, N-acetylated by NAT3.

The protein resides in the cytoplasm. Its subcellular location is the nucleus. The 26S proteasome is involved in the ATP-dependent degradation of ubiquitinated proteins. The regulatory (or ATPase) complex confers ATP dependency and substrate specificity to the 26S complex. This chain is 26S proteasome regulatory subunit 6B homolog (RPT3), found in Saccharomyces cerevisiae (strain ATCC 204508 / S288c) (Baker's yeast).